The primary structure comprises 280 residues: UPF0750 membrane protein YitT (280 aa).

The next 4 helical transmembrane spans lie at 9-29 (LLIV…FLIP), 54-74 (FYIS…ILGW), 80-100 (SFTV…GILP), and 151-171 (VGTY…LLQG).

Belongs to the UPF0750 family.

The protein localises to the cell membrane. This chain is UPF0750 membrane protein YitT (yitT), found in Bacillus subtilis (strain 168).